A 137-amino-acid chain; its full sequence is 1,4-dihydroxy-2-naphthoyl-CoA hydrolase (137 aa).

D13 is a catalytic residue.

The protein belongs to the 4-hydroxybenzoyl-CoA thioesterase family. DHNA-CoA hydrolase subfamily.

The enzyme catalyses 1,4-dihydroxy-2-naphthoyl-CoA + H2O = 1,4-dihydroxy-2-naphthoate + CoA + H(+). The protein operates within cofactor biosynthesis; phylloquinone biosynthesis. Its pathway is quinol/quinone metabolism; 1,4-dihydroxy-2-naphthoate biosynthesis; 1,4-dihydroxy-2-naphthoate from chorismate: step 7/7. Functionally, catalyzes the hydrolysis of 1,4-dihydroxy-2-naphthoyl-CoA (DHNA-CoA) to 1,4-dihydroxy-2-naphthoate (DHNA), a reaction involved in phylloquinone (vitamin K1) biosynthesis. The polypeptide is 1,4-dihydroxy-2-naphthoyl-CoA hydrolase (Crocosphaera subtropica (strain ATCC 51142 / BH68) (Cyanothece sp. (strain ATCC 51142))).